Here is a 210-residue protein sequence, read N- to C-terminus: MEKKRNISMAVIRRLPKYYRYLAELMDNDVDRISSKELSEKIGFTASQIRQDLNNFGDFGQQGYGYNVKDLYNEIRSILGLDENYNIAIIGAGNIGQAIANYTNFDKMGFNLKGIFDVNPKLLGLKIRDVEIRDIDQLESFLQEEKIHIGVICVTKSNAQDVCNTLIKNGVKGIWNFAPIDLNGADNVVIENVHLSESLLTLTYLLNGFN.

Residues 17–56 (KYYRYLAELMDNDVDRISSKELSEKIGFTASQIRQDLNNF) constitute a DNA-binding region (H-T-H motif). 91 to 96 (GAGNIG) provides a ligand contact to NAD(+).

The protein belongs to the transcriptional regulatory Rex family. As to quaternary structure, homodimer.

It localises to the cytoplasm. Modulates transcription in response to changes in cellular NADH/NAD(+) redox state. The sequence is that of Redox-sensing transcriptional repressor Rex from Clostridium novyi (strain NT).